Consider the following 254-residue polypeptide: Peroxisomal membrane protein 11-2 (254 aa).

The Cytoplasmic portion of the chain corresponds to Met-1–Leu-113. Residues Leu-114–Leu-134 traverse the membrane as a helical segment. Topologically, residues Ala-135–Gly-227 are lumenal. Residues Leu-228 to Val-247 traverse the membrane as a helical segment. The Cytoplasmic portion of the chain corresponds to His-248–Cys-254.

It belongs to the peroxin-11 family.

The protein resides in the peroxisome membrane. Functionally, involved in peroxisomal proliferation. The protein is Peroxisomal membrane protein 11-2 (PEX11-2) of Oryza sativa subsp. japonica (Rice).